The following is a 143-amino-acid chain: Transcription antitermination protein NusB (143 aa).

It belongs to the NusB family.

Functionally, involved in transcription antitermination. Required for transcription of ribosomal RNA (rRNA) genes. Binds specifically to the boxA antiterminator sequence of the ribosomal RNA (rrn) operons. This is Transcription antitermination protein NusB from Buchnera aphidicola subsp. Acyrthosiphon pisum (strain 5A).